The following is a 547-amino-acid chain: MFS-type transporter M6 (547 aa).

Residues 1-45 (MHRRRRDNLMTPAEMVASMKPPQSLSTEDDDGSRRDSESSADVLK) are disordered. Residues 81–101 (VLVVASFAAAISPFSTSTYYP) form a helical membrane-spanning segment. An N-linked (GlcNAc...) asparagine glycan is attached at Asn118. The chain crosses the membrane as a helical span at residues 146–166 (PMFLVCFAIYFVANVGLALQN). N-linked (GlcNAc...) asparagine glycosylation occurs at Asn167. Transmembrane regions (helical) follow at residues 206–226 (LIYA…IGGL) and 236–256 (VFWF…IFFG). A glycan (N-linked (GlcNAc...) asparagine) is linked at Asn274. The next 5 membrane-spanning stretches (helical) occupy residues 317–337 (FILS…TSVL), 347–367 (YDAV…LLAY), 407–427 (LGFV…YGWQ), 432–452 (APLA…TGVM), and 469–489 (AVGA…VAVV). Asn493 carries N-linked (GlcNAc...) asparagine glycosylation. Residues 496-516 (AGIGWTATVTAGLWVLMMPTL) form a helical membrane-spanning segment.

The protein belongs to the major facilitator superfamily. CAR1 family.

The protein resides in the membrane. Functionally, MFS-type transporter; part of the gene cluster that mediates the biosynthesis of squalestatin S1 (SQS1, also known as zaragozic acid A), a heavily oxidized fungal polyketide that offers potent cholesterol lowering activity by targeting squalene synthase (SS). This chain is MFS-type transporter M6, found in Phoma sp. (strain ATCC 20986 / MF5453).